The chain runs to 578 residues: MNNVIDFWPTLKRLLYYGTNVKKYLILGFTLLLFSSIFEVLNPILISCFIKHYFINNTVNYSLKIITYYLILQILAAILNYHQNIIFNKISLTVIQKLRYDVMSSTLQLPIKMFDQRPIGQFISRITNDTETIKELYDTVIKSLFQNIILILITLITMFILEWRMACIASIIFPIALIIMLLYQYFSKPILRKIKVYIANIYNIFNEIINGIDVIQQFHQEQKFRKSIKKISISHYYFRMKILKLDSFLLRPLLNFCSTLILCGLILIFGIYPIGFFEIGTLYAFITYLNRLNEPLITITSQQSIFQQAIVAGERIFEIIHTPKQQYGDDSLHFREGNIKVKNLYFSYTNNNVYVLKNINIFIPSKQFIAFVGRTGSGKSTLSKLLIGHYPATLGKICLDERNIQTFTHNVLKKNISIVQQDPIILNDTILENITLGRNISTKKVLKILKTIKLIQFVNSLPKGLKTLLGENGNILSIGQKQLLSIARTLISCPKILILDEATSNVDLDTENNIKKILSSVKHLTTIIAITHRLSTIKHADNIFVFNNGEIVESGTHYNLIRKKSYYKNMYYSQAIKN.

One can recognise an ABC transmembrane type-1 domain in the interval 25–308 (LILGFTLLLF…ITSQQSIFQQ (284 aa)). 6 helical membrane passes run 26-46 (ILGFTLLLFSSIFEVLNPILI), 59-79 (VNYSLKIITYYLILQILAAIL), 143-163 (SLFQNIILILITLITMFILEW), 166-186 (ACIASIIFPIALIIMLLYQYF), 196-216 (VYIANIYNIFNEIINGIDVIQ), and 260-280 (LILCGLILIFGIYPIGFFEIG). One can recognise an ABC transporter domain in the interval 339-573 (IKVKNLYFSY…KSYYKNMYYS (235 aa)). Position 373 to 380 (373 to 380 (GRTGSGKS)) interacts with ATP.

This sequence belongs to the ABC transporter superfamily. Drug exporter-2 (TC 3.A.1.117) family.

The protein localises to the cell membrane. It catalyses the reaction ATP + H2O + xenobioticSide 1 = ADP + phosphate + xenobioticSide 2.. This is Multidrug resistance-like ATP-binding protein MdlB (mdlB) from Buchnera aphidicola subsp. Baizongia pistaciae (strain Bp).